Here is a 180-residue protein sequence, read N- to C-terminus: NADH-quinone oxidoreductase subunit I (180 aa).

2 consecutive 4Fe-4S ferredoxin-type domains span residues 48-80 (IVLT…LQKS) and 90-119 (EFFR…LTPD). Residues cysteine 60, cysteine 63, cysteine 66, cysteine 70, cysteine 99, cysteine 102, cysteine 105, and cysteine 109 each contribute to the [4Fe-4S] cluster site. Basic and acidic residues predominate over residues 161 to 174 (KPKGDAENEAKPID). The disordered stretch occupies residues 161 to 180 (KPKGDAENEAKPIDVKSLLP).

The protein belongs to the complex I 23 kDa subunit family. In terms of assembly, NDH-1 is composed of 13 different subunits. Subunits NuoA, H, J, K, L, M, N constitute the membrane sector of the complex. The cofactor is [4Fe-4S] cluster.

The protein localises to the cell inner membrane. The enzyme catalyses a quinone + NADH + 5 H(+)(in) = a quinol + NAD(+) + 4 H(+)(out). Its function is as follows. NDH-1 shuttles electrons from NADH, via FMN and iron-sulfur (Fe-S) centers, to quinones in the respiratory chain. The immediate electron acceptor for the enzyme in this species is believed to be ubiquinone. Couples the redox reaction to proton translocation (for every two electrons transferred, four hydrogen ions are translocated across the cytoplasmic membrane), and thus conserves the redox energy in a proton gradient. The sequence is that of NADH-quinone oxidoreductase subunit I from Shewanella oneidensis (strain ATCC 700550 / JCM 31522 / CIP 106686 / LMG 19005 / NCIMB 14063 / MR-1).